We begin with the raw amino-acid sequence, 323 residues long: tRNA-modifying protein YgfZ (323 aa).

Residues W29 and W182 each coordinate folate.

The protein belongs to the tRNA-modifying YgfZ family.

It is found in the cytoplasm. Its function is as follows. Folate-binding protein involved in regulating the level of ATP-DnaA and in the modification of some tRNAs. It is probably a key factor in regulatory networks that act via tRNA modification, such as initiation of chromosomal replication. The sequence is that of tRNA-modifying protein YgfZ from Vibrio cholerae serotype O1 (strain M66-2).